We begin with the raw amino-acid sequence, 65 residues long: 7 kDa A-type inclusion protein (65 aa).

Over residues 1–20 (MSNQNIPQLSEYQTSVSQVA) the composition is skewed to polar residues. Residues 1–32 (MSNQNIPQLSEYQTSVSQVAVTPPPKPKTPQI) are disordered.

This Bos taurus (Bovine) protein is 7 kDa A-type inclusion protein.